We begin with the raw amino-acid sequence, 144 residues long: D-aminoacyl-tRNA deacylase (144 aa).

Residues 136 to 137 (GP) carry the Gly-cisPro motif, important for rejection of L-amino acids motif.

The protein belongs to the DTD family. As to quaternary structure, homodimer.

Its subcellular location is the cytoplasm. It carries out the reaction glycyl-tRNA(Ala) + H2O = tRNA(Ala) + glycine + H(+). It catalyses the reaction a D-aminoacyl-tRNA + H2O = a tRNA + a D-alpha-amino acid + H(+). Its function is as follows. An aminoacyl-tRNA editing enzyme that deacylates mischarged D-aminoacyl-tRNAs. Also deacylates mischarged glycyl-tRNA(Ala), protecting cells against glycine mischarging by AlaRS. Acts via tRNA-based rather than protein-based catalysis; rejects L-amino acids rather than detecting D-amino acids in the active site. By recycling D-aminoacyl-tRNA to D-amino acids and free tRNA molecules, this enzyme counteracts the toxicity associated with the formation of D-aminoacyl-tRNA entities in vivo and helps enforce protein L-homochirality. This is D-aminoacyl-tRNA deacylase from Vibrio atlanticus (strain LGP32) (Vibrio splendidus (strain Mel32)).